A 431-amino-acid chain; its full sequence is 3-deoxy-D-manno-octulosonic acid transferase (431 aa).

The chain crosses the membrane as a helical; Signal-anchor span at residues 5 to 27 (WLTSRLYDAFLVCAFFVSAPRIF). Residue E67 is the Proton acceptor of the active site. CMP-binding positions include 275-276 (PR), 315-317 (MGV), and 342-345 (NLLE).

The protein belongs to the glycosyltransferase group 1 family. Glycosyltransferase 30 subfamily.

The protein localises to the cell inner membrane. The enzyme catalyses lipid IVA (E. coli) + CMP-3-deoxy-beta-D-manno-octulosonate = alpha-Kdo-(2-&gt;6)-lipid IVA (E. coli) + CMP + H(+). It catalyses the reaction alpha-Kdo-(2-&gt;6)-lipid IVA (E. coli) + CMP-3-deoxy-beta-D-manno-octulosonate = alpha-Kdo-(2-&gt;4)-alpha-Kdo-(2-&gt;6)-lipid IVA (E. coli) + CMP + H(+). It carries out the reaction alpha-Kdo-(2-&gt;4)-alpha-Kdo-(2-&gt;6)-lipid IVA (E. coli) + CMP-3-deoxy-beta-D-manno-octulosonate = alpha-Kdo-(2-&gt;8)-alpha-Kdo-(2-&gt;4)-alpha-Kdo-(2-&gt;6)-lipid IVA (E. coli) + CMP + H(+). It participates in bacterial outer membrane biogenesis; LPS core biosynthesis. Involved in lipopolysaccharide (LPS) biosynthesis. Catalyzes the transfer of three 3-deoxy-D-manno-octulosonate (Kdo) residues from CMP-Kdo to lipid IV(A), the tetraacyldisaccharide-1,4'-bisphosphate precursor of lipid A. Thus generates the genus-specific LPS epitope of Chlamydia, composed of the trisaccharide alpha-Kdo-(2-&gt;8)-alpha-Kdo-(2-&gt;4)-alpha-Kdo. The protein is 3-deoxy-D-manno-octulosonic acid transferase (waaA) of Chlamydia trachomatis serovar D (strain ATCC VR-885 / DSM 19411 / UW-3/Cx).